We begin with the raw amino-acid sequence, 422 residues long: Tyrosine--tRNA ligase (422 aa).

An L-tyrosine-binding site is contributed by Tyr-37. Residues 42–51 carry the 'HIGH' region motif; the sequence is PTEESLHIGH. L-tyrosine contacts are provided by Tyr-175 and Gln-179. The short motif at 235-239 is the 'KMSKS' region element; it reads KFGKT. Lys-238 is an ATP binding site. The 58-residue stretch at 357 to 414 folds into the S4 RNA-binding domain; sequence KDLQEALVLTSLAQSRTQAKNMIISNSISINTEKIRKNHIFHEKDKLFGKFTLLSRGK.

Belongs to the class-I aminoacyl-tRNA synthetase family. TyrS type 1 subfamily. In terms of assembly, homodimer.

It is found in the cytoplasm. The catalysed reaction is tRNA(Tyr) + L-tyrosine + ATP = L-tyrosyl-tRNA(Tyr) + AMP + diphosphate + H(+). Its function is as follows. Catalyzes the attachment of tyrosine to tRNA(Tyr) in a two-step reaction: tyrosine is first activated by ATP to form Tyr-AMP and then transferred to the acceptor end of tRNA(Tyr). The chain is Tyrosine--tRNA ligase from Buchnera aphidicola subsp. Acyrthosiphon pisum (strain 5A).